Here is a 530-residue protein sequence, read N- to C-terminus: Phosphoenolpyruvate carboxykinase (ATP) (530 aa).

R57, Y193, and K199 together coordinate substrate. ATP contacts are provided by residues K199, H218, and 234–242; that span reads GLSGTGKTT. 2 residues coordinate Mn(2+): K199 and H218. D255 is a binding site for Mn(2+). ATP is bound by residues E283, R320, and T445. Position 320 (R320) interacts with substrate.

This sequence belongs to the phosphoenolpyruvate carboxykinase (ATP) family. The cofactor is Mn(2+).

It localises to the cytoplasm. The catalysed reaction is oxaloacetate + ATP = phosphoenolpyruvate + ADP + CO2. It participates in carbohydrate biosynthesis; gluconeogenesis. Functionally, involved in the gluconeogenesis. Catalyzes the conversion of oxaloacetate (OAA) to phosphoenolpyruvate (PEP) through direct phosphoryl transfer between the nucleoside triphosphate and OAA. The sequence is that of Phosphoenolpyruvate carboxykinase (ATP) from Leptospira interrogans serogroup Icterohaemorrhagiae serovar copenhageni (strain Fiocruz L1-130).